A 236-amino-acid polypeptide reads, in one-letter code: Purine nucleoside phosphorylase DeoD-type (236 aa).

His5 serves as a coordination point for a purine D-ribonucleoside. Phosphate contacts are provided by residues Gly21, Arg25, Arg44, and 88 to 91; that span reads RIGS. Residues 180–182 and 204–205 contribute to the a purine D-ribonucleoside site; these read EME and SD. Asp205 serves as the catalytic Proton donor.

The protein belongs to the PNP/UDP phosphorylase family. In terms of assembly, homohexamer; trimer of homodimers.

It carries out the reaction a purine D-ribonucleoside + phosphate = a purine nucleobase + alpha-D-ribose 1-phosphate. The enzyme catalyses a purine 2'-deoxy-D-ribonucleoside + phosphate = a purine nucleobase + 2-deoxy-alpha-D-ribose 1-phosphate. Its function is as follows. Catalyzes the reversible phosphorolytic breakdown of the N-glycosidic bond in the beta-(deoxy)ribonucleoside molecules, with the formation of the corresponding free purine bases and pentose-1-phosphate. The polypeptide is Purine nucleoside phosphorylase DeoD-type (Chromobacterium violaceum (strain ATCC 12472 / DSM 30191 / JCM 1249 / CCUG 213 / NBRC 12614 / NCIMB 9131 / NCTC 9757 / MK)).